A 361-amino-acid polypeptide reads, in one-letter code: Phosphoserine aminotransferase (361 aa).

Arg-42 provides a ligand contact to L-glutamate. Pyridoxal 5'-phosphate-binding positions include 76–77 (AR), Trp-102, Thr-153, Asp-173, and Gln-196. Lys-197 carries the post-translational modification N6-(pyridoxal phosphate)lysine. Residue 238 to 239 (NT) participates in pyridoxal 5'-phosphate binding.

The protein belongs to the class-V pyridoxal-phosphate-dependent aminotransferase family. SerC subfamily. In terms of assembly, homodimer. Pyridoxal 5'-phosphate is required as a cofactor.

It is found in the cytoplasm. The catalysed reaction is O-phospho-L-serine + 2-oxoglutarate = 3-phosphooxypyruvate + L-glutamate. The enzyme catalyses 4-(phosphooxy)-L-threonine + 2-oxoglutarate = (R)-3-hydroxy-2-oxo-4-phosphooxybutanoate + L-glutamate. It functions in the pathway amino-acid biosynthesis; L-serine biosynthesis; L-serine from 3-phospho-D-glycerate: step 2/3. It participates in cofactor biosynthesis; pyridoxine 5'-phosphate biosynthesis; pyridoxine 5'-phosphate from D-erythrose 4-phosphate: step 3/5. Its function is as follows. Catalyzes the reversible conversion of 3-phosphohydroxypyruvate to phosphoserine and of 3-hydroxy-2-oxo-4-phosphonooxybutanoate to phosphohydroxythreonine. This is Phosphoserine aminotransferase from Buchnera aphidicola subsp. Acyrthosiphon pisum (strain Tuc7).